We begin with the raw amino-acid sequence, 597 residues long: Alkyldihydroxyacetonephosphate synthase (597 aa).

Residues 131–313 form the FAD-binding PCMH-type domain; sequence IPRLPDIVVW…SEVTIKIFPI (183 aa). FAD-binding positions include 163–169, 232–238, 245–248, and 297–303; these read PIGGGTS, DSIEFST, TRAS, and EGTLGVV. Position 444 (Arg444) interacts with substrate. Catalysis depends on Tyr507, which acts as the Proton donor/acceptor. An important for enzyme activity region spans residues 544–546; it reads HHH. The Microbody targeting signal motif lies at 595–597; sequence CKL.

It belongs to the FAD-binding oxidoreductase/transferase type 4 family. In terms of assembly, homodimer. FAD is required as a cofactor.

It localises to the peroxisome. It carries out the reaction a long chain fatty alcohol + a 1-acylglycerone 3-phosphate = a 1-O-alkylglycerone 3-phosphate + a long-chain fatty acid + H(+). Its pathway is glycerolipid metabolism; ether lipid biosynthesis. Its function is as follows. Catalyzes the exchange of an acyl for a long-chain alkyl group and the formation of the ether bond in the biosynthesis of ether phospholipids. This is Alkyldihydroxyacetonephosphate synthase (ads-1) from Caenorhabditis elegans.